Here is a 189-residue protein sequence, read N- to C-terminus: CASP-like protein 1F2 (189 aa).

Over 1 to 27 the chain is Cytoplasmic; sequence MESLEVANGKSSALGVSREASSPPQMG. The helical transmembrane segment at 28 to 48 threads the bilayer; sequence FFIAQVVLRFFTLAFTGAAIA. Topologically, residues 49–77 are extracellular; sequence VMVTAKETVEVFSISFTVRYSYLSAFKFL. A helical transmembrane segment spans residues 78–98; that stretch reads VGADAVVCGFSMLSLIFVSIF. Over 99-113 the chain is Cytoplasmic; the sequence is NKGKSNHYFFLYFHD. Residues 114-134 traverse the membrane as a helical segment; the sequence is LILMVLSMSACAAATAVGYVG. The Extracellular segment spans residues 135–156; that stretch reads RYGQDKAAWMAVCGNVKMFCDK. The helical transmembrane segment at 157–177 threads the bilayer; that stretch reads ALASILLSLIGFICLFLLTIM. The Cytoplasmic segment spans residues 178-189; it reads AARNLRVSGHLI.

The protein belongs to the Casparian strip membrane proteins (CASP) family. Homodimer and heterodimers.

The protein localises to the cell membrane. This Vitis vinifera (Grape) protein is CASP-like protein 1F2.